The following is a 255-amino-acid chain: H-2 class II histocompatibility antigen, E-D alpha chain (255 aa).

The signal sequence occupies residues 1–25; sequence MATIGALVLRFFFIAVLMSSQKSWA. Residues 26–109 are alpha-1; that stretch reads IKEEHTIIQA…ERSNNTPDAN (84 aa). The Extracellular portion of the chain corresponds to 26–216; the sequence is IKEEHTIIQA…EKTLLPETKE (191 aa). Positions 110–203 are alpha-2; that stretch reads VAPEVTVLSR…GLEEPLRKTW (94 aa). The region spanning 112–204 is the Ig-like C1-type domain; the sequence is PEVTVLSRSP…LEEPLRKTWE (93 aa). A disulfide bridge connects residues cysteine 132 and cysteine 188. Asparagine 143 is a glycosylation site (N-linked (GlcNAc...) asparagine). Positions 204–216 are connecting peptide; that stretch reads EFEEKTLLPETKE. The helical transmembrane segment at 217 to 242 threads the bilayer; sequence NVMCALGLFVGLVGIVVGIILIMKGI. Residues 243–255 are Cytoplasmic-facing; sequence KKRNVVERRQGAL.

This sequence belongs to the MHC class II family.

The protein resides in the membrane. The chain is H-2 class II histocompatibility antigen, E-D alpha chain (H2-Ea) from Mus musculus (Mouse).